Reading from the N-terminus, the 117-residue chain is Large ribosomal subunit protein eL8 (117 aa).

The protein belongs to the eukaryotic ribosomal protein eL8 family. Part of the 50S ribosomal subunit. Probably part of the RNase P complex.

The protein localises to the cytoplasm. Functionally, multifunctional RNA-binding protein that recognizes the K-turn motif in ribosomal RNA, the RNA component of RNase P, box H/ACA, box C/D and box C'/D' sRNAs. This chain is Large ribosomal subunit protein eL8, found in Methanococcus aeolicus (strain ATCC BAA-1280 / DSM 17508 / OCM 812 / Nankai-3).